A 503-amino-acid chain; its full sequence is ATP synthase subunit beta (503 aa).

157-164 contributes to the ATP binding site; the sequence is GGAGVGKT.

The protein belongs to the ATPase alpha/beta chains family. In terms of assembly, F-type ATPases have 2 components, CF(1) - the catalytic core - and CF(0) - the membrane proton channel. CF(1) has five subunits: alpha(3), beta(3), gamma(1), delta(1), epsilon(1). CF(0) has three main subunits: a(1), b(2) and c(9-12). The alpha and beta chains form an alternating ring which encloses part of the gamma chain. CF(1) is attached to CF(0) by a central stalk formed by the gamma and epsilon chains, while a peripheral stalk is formed by the delta and b chains.

Its subcellular location is the cell membrane. The catalysed reaction is ATP + H2O + 4 H(+)(in) = ADP + phosphate + 5 H(+)(out). Functionally, produces ATP from ADP in the presence of a proton gradient across the membrane. The catalytic sites are hosted primarily by the beta subunits. This Christiangramia forsetii (strain DSM 17595 / CGMCC 1.15422 / KT0803) (Gramella forsetii) protein is ATP synthase subunit beta.